Reading from the N-terminus, the 540-residue chain is Berberine bridge enzyme-like 16 (540 aa).

The signal sequence occupies residues 1-24 (MKFWSRPLTFLIIIIYLIIQQVNS). Residues C38 and C101 are joined by a disulfide bond. N59 carries an N-linked (GlcNAc...) asparagine glycan. In terms of domain architecture, FAD-binding PCMH-type spans 79–254 (STRKPEVIVA…LAWKIKLVRV (176 aa)). A cross-link (6-(S-cysteinyl)-8alpha-(pros-histidyl)-FAD (His-Cys)) is located at residues 116–178 (HDYEGFSYTS…KVHAFPAGVC (63 aa)). Residues N325 and N496 are each glycosylated (N-linked (GlcNAc...) asparagine).

The protein belongs to the oxygen-dependent FAD-linked oxidoreductase family. FAD serves as cofactor. In terms of processing, the FAD cofactor is bound via a bicovalent 6-S-cysteinyl, 8alpha-N1-histidyl FAD linkage.

The protein localises to the secreted. It is found in the cell wall. The sequence is that of Berberine bridge enzyme-like 16 from Arabidopsis thaliana (Mouse-ear cress).